Consider the following 358-residue polypeptide: DnaJ homolog subfamily B member 11 (358 aa).

An N-terminal signal peptide occupies residues 1–22; it reads MAPQNLGTLCLLLLYLLGAAIA. The J domain maps to 25 to 90; that stretch reads DFYKILGVPR…EKRKQYDTYG (66 aa). At Thr188 the chain carries Phosphothreonine. Asn261 carries an N-linked (GlcNAc...) asparagine glycan.

As to quaternary structure, part of a large chaperone multiprotein complex comprising DNAJB11, HSP90B1, HSPA5, HYOU, PDIA2, PDIA4, PDIA6, PPIB, SDF2L1, UGGT1 and very small amounts of ERP29, but not, or at very low levels, CALR nor CANX. Binds to denatured substrates in an ATP-independent manner. Interacts via the J domain with HSPA5 in an ATP-dependent manner. Post-translationally, contains high-mannose Endo H-sensitive carbohydrates. Cys-169, Cys-171, Cys-193 and Cys-196 form intramolecular disulfide bonds. The preferential partner for each Cys is not known. In terms of tissue distribution, pancreas.

The protein localises to the endoplasmic reticulum lumen. Its function is as follows. As a co-chaperone for HSPA5 it is required for proper folding, trafficking or degradation of proteins. Binds directly to both unfolded proteins that are substrates for ERAD and nascent unfolded peptide chains, but dissociates from the HSPA5-unfolded protein complex before folding is completed. May help recruiting HSPA5 and other chaperones to the substrate. Stimulates HSPA5 ATPase activity. It is necessary for maturation and correct trafficking of PKD1. The protein is DnaJ homolog subfamily B member 11 (DNAJB11) of Canis lupus familiaris (Dog).